Consider the following 139-residue polypeptide: S-protein homolog 14 (139 aa).

Positions 1 to 20 (MNRFIIFMFVVVTYFGLNVA) are cleaved as a signal peptide. N136 carries an N-linked (GlcNAc...) asparagine glycan.

This sequence belongs to the plant self-incompatibility (S1) protein family.

Its subcellular location is the secreted. The polypeptide is S-protein homolog 14 (Arabidopsis thaliana (Mouse-ear cress)).